The primary structure comprises 166 residues: MNYTSYILAFQLCVILGSSGCYCQAPFFDEIENLKKYFNASHPDVADGGPLFLEILKNWKEESDKKIIQSQIVSFYFKLFENLKDNRIIQRSMDIIKQDMFQKFLNGSSEKLEDFKKLIQIPVDNLKVQRKAISELIKVMNDLSPKSNLRKRKRRQNQIQGRRASK.

The first 23 residues, 1–23 (MNYTSYILAFQLCVILGSSGCYC), serve as a signal peptide directing secretion. Gln-24 is subject to Pyrrolidone carboxylic acid. Residues Asn-39 and Asn-106 are each glycosylated (N-linked (GlcNAc...) asparagine). Residues 147-166 (SNLRKRKRRQNQIQGRRASK) form a disordered region.

The protein belongs to the type II (or gamma) interferon family. Homodimer. Interacts with IFNGR1 (via extracellular domain); this interaction promotes IFNGR1 dimerization. As to expression, released primarily from activated T lymphocytes.

The protein localises to the secreted. Type II interferon produced by immune cells such as T-cells and NK cells that plays crucial roles in antimicrobial, antiviral, and antitumor responses by activating effector immune cells and enhancing antigen presentation. Primarily signals through the JAK-STAT pathway after interaction with its receptor IFNGR1 to affect gene regulation. Upon IFNG binding, IFNGR1 intracellular domain opens out to allow association of downstream signaling components JAK2, JAK1 and STAT1, leading to STAT1 activation, nuclear translocation and transcription of IFNG-regulated genes. Many of the induced genes are transcription factors such as IRF1 that are able to further drive regulation of a next wave of transcription. Plays a role in class I antigen presentation pathway by inducing a replacement of catalytic proteasome subunits with immunoproteasome subunits. In turn, increases the quantity, quality, and repertoire of peptides for class I MHC loading. Increases the efficiency of peptide generation also by inducing the expression of activator PA28 that associates with the proteasome and alters its proteolytic cleavage preference. Up-regulates as well MHC II complexes on the cell surface by promoting expression of several key molecules such as cathepsins B/CTSB, H/CTSH, and L/CTSL. Participates in the regulation of hematopoietic stem cells during development and under homeostatic conditions by affecting their development, quiescence, and differentiation. The polypeptide is Interferon gamma (IFNG) (Lama glama (Llama)).